We begin with the raw amino-acid sequence, 694 residues long: Rabphilin-3A (694 aa).

Residues 1-12 (MTDTVFSNSSNR) show a composition bias toward polar residues. A disordered region spans residues 1–51 (MTDTVFSNSSNRWMYPSDRPLQSNDKEQLQAGWSVHPGGQPDRQRKQEELT). The 117-residue stretch at 44–160 (QRKQEELTDE…KRSGAWFFKG (117 aa)) folds into the RabBD domain. The segment at 92–148 (GDGVNRCILCGEQLGMLGSACVVCEDCKKNVCTKCGVETNNRLHSVWLCKICIEQRE) adopts an FYVE-type zinc-finger fold. Positions 98, 101, 115, 118, 123, 126, 140, and 143 each coordinate Zn(2+). The tract at residues 166-388 (LPQPMPIKKT…EEEANSYDSD (223 aa)) is disordered. Residues 177 to 186 (PQQPVSEPAA) are compositionally biased toward low complexity. Residues 202–211 (ARGDSEDRRG) show a composition bias toward basic and acidic residues. Arginine 226 bears the Omega-N-methylarginine mark. Serine 272 carries the phosphoserine modification. Over residues 352-370 (PSGPYSQASAAAPQPAAAR) the composition is skewed to low complexity. Residues 375 to 388 (PEEEEEEANSYDSD) show a composition bias toward acidic residues. The 123-residue stretch at 392-514 (TLGALEFSLL…KPNQRKNFNI (123 aa)) folds into the C2 1 domain. Residues methionine 422, aspartate 423, aspartate 429, aspartate 484, glutamate 485, aspartate 486, glutamate 492, glutamate 539, aspartate 581, aspartate 587, aspartate 641, tyrosine 642, aspartate 643, and aspartate 649 each coordinate Ca(2+). The 134-residue stretch at 550-683 (ERGKILVSLM…NKDKKIERWH (134 aa)) folds into the C2 2 domain. Serine 692 and serine 693 each carry phosphoserine.

Interacts with RAB3B, RAB3C, RAB3D, RAB8A, RAB27A and RAB27B. Interacts with RAB3A; this interaction recruits RPH3A to synaptic vesicules. Interacts (via C2B domain) with SNAP25. Interacts with deubiquitinating enzyme CAND1; this interaction results in the deubiquitination of RPH3A. Interacts with GRIN2A and DLG4; this ternary complex regulates NMDA receptor composition at postsynaptic membranes. Interacts with SNCA. Ca(2+) is required as a cofactor. In terms of processing, ubiquitinated. Deubiquitinated by CAND1 to prevent its degradation.

It is found in the cytoplasmic vesicle. The protein localises to the secretory vesicle. Its subcellular location is the synaptic vesicle membrane. The protein resides in the cell projection. It localises to the dendritic spine. It is found in the postsynaptic cell membrane. The protein localises to the membrane. Its function is as follows. Plays an essential role in docking and fusion steps of regulated exocytosis. At the presynaptic level, RPH3A is recruited by RAB3A to the synaptic vesicle membrane in a GTP-dependent manner where it modulates synaptic vesicle trafficking and calcium-triggered neurotransmitter release. In the post-synaptic compartment, forms a ternary complex with GRIN2A and DLG4 and regulates NMDA receptor stability. Also plays a role in the exocytosis of arginine vasopressin hormone. This chain is Rabphilin-3A (RPH3A), found in Homo sapiens (Human).